The following is a 400-amino-acid chain: CCA-adding enzyme (400 aa).

Residues glycine 28 and arginine 31 each coordinate ATP. Residues glycine 28 and arginine 31 each coordinate CTP. Mg(2+) contacts are provided by aspartate 41 and aspartate 43. ATP contacts are provided by arginine 112, aspartate 155, arginine 158, arginine 161, and arginine 164. The CTP site is built by arginine 112, aspartate 155, arginine 158, arginine 161, and arginine 164.

This sequence belongs to the tRNA nucleotidyltransferase/poly(A) polymerase family. Bacterial CCA-adding enzyme type 3 subfamily. As to quaternary structure, homodimer. Requires Mg(2+) as cofactor.

The enzyme catalyses a tRNA precursor + 2 CTP + ATP = a tRNA with a 3' CCA end + 3 diphosphate. It carries out the reaction a tRNA with a 3' CCA end + 2 CTP + ATP = a tRNA with a 3' CCACCA end + 3 diphosphate. Its function is as follows. Catalyzes the addition and repair of the essential 3'-terminal CCA sequence in tRNAs without using a nucleic acid template. Adds these three nucleotides in the order of C, C, and A to the tRNA nucleotide-73, using CTP and ATP as substrates and producing inorganic pyrophosphate. tRNA 3'-terminal CCA addition is required both for tRNA processing and repair. Also involved in tRNA surveillance by mediating tandem CCA addition to generate a CCACCA at the 3' terminus of unstable tRNAs. While stable tRNAs receive only 3'-terminal CCA, unstable tRNAs are marked with CCACCA and rapidly degraded. This is CCA-adding enzyme from Staphylococcus aureus (strain MRSA252).